Reading from the N-terminus, the 1501-residue chain is Multidrug resistance protein CDR1 (1501 aa).

The tract at residues 1-30 (MSDSKMSSQDESKLEKAISQDSSSENHSIN) is disordered. Over 1–513 (MSDSKMSSQD…NFLRMKGDPS (513 aa)) the chain is Cytoplasmic. Residues 8 to 18 (SQDESKLEKAI) are compositionally biased toward basic and acidic residues. One can recognise an ABC transporter 1 domain in the interval 150–404 (LATEGFRHFQ…FEKMGWKCPQ (255 aa)). Residues 514–534 (IPIFSVFGQLVMGLILSSVFY) form a helical membrane-spanning segment. Residue N535 is glycosylated (N-linked (GlcNAc...) asparagine). 4 consecutive transmembrane segments (helical) span residues 549-569 (AMFFAVLFNAFSSLLEIMSLF), 598-618 (LPVKLAMSMSFNFVFYFMVNF), 623-643 (GRFFFYWLMCIWCTFVMSHLF), and 655-675 (GAMTPATVLLLAMVIYTGFVI). N-linked (GlcNAc...) asparagine glycosylation occurs at N724. The helical transmembrane segment at 765-785 (LGITIGFAVFFLAIYIALTEF) threads the bilayer. Residues 786-1195 (NKGAMQKGEI…TIVQDWRSPG (410 aa)) are Cytoplasmic-facing. The 245-residue stretch at 859-1103 (FFWRDLTYQV…MINYFEKYGA (245 aa)) folds into the ABC transporter 2 domain. Residue 895–902 (GASGAGKT) coordinates ATP. A run of 6 helical transmembrane segments spans residues 1196 to 1216 (YIYSKIFLVVSAALFNGFSFF), 1230 to 1250 (FSVFMFFIPFNTLVQQMLPYF), 1281 to 1301 (IPYQVAVGTIAFFCWYYPLGL), 1315 to 1335 (GVLMWMLVTAFYVYTATMGQL), 1356 to 1376 (MCLNFCGVLAGPDVLPGFWIF), and 1467 to 1487 (FGIFIAFIAINIILTVIFYWL).

It belongs to the ABC transporter superfamily. ABCG family. PDR (TC 3.A.1.205) subfamily.

Its subcellular location is the membrane. In terms of biological role, transporter, whose physiological function is not yet established. Confers resistance to the chemical cycloheximide. This chain is Multidrug resistance protein CDR1 (CDR1), found in Candida albicans (Yeast).